The chain runs to 498 residues: MRINPTTSGPGVSTLEGKNLGRIAQIIGPVLDVAFPPGKMPNIYNAFVVKGRDTAGQQINVTCEVQQLLGNNRVRTVAMSATDGLMRGMEVIDTGAPLSVPVGGATLGRIFNVLGEPVDNLGPVDTRTTSPIHRSAPAFIQLDTRLSIFETGIKVVDLLAPYRRGGKIGLFGGAGVGKTVLIMELINNIAKAHGGVSVFGGVGERTREGNDLYMEMKESGVINEQNLAESKVALVYGQMNEPPGARMRVGLTALTMAEYFRDVNEQDVLLFIDNIFRFVQAGSEVSALLGRMPSAVGYQPTLSTEMGSLQERITSTKEGSITSIQAVYVPADDLTDPAPATTFAHLDATTVLSRGLAAKGIYPAVDPLDSTSTMLQPRIVGEEHYETAQRVKQTSQRYKELQDIIAILGLDELSEEDRLTVARARKIERFLSQPFFVAEVFTGSPGKYVGLAETIRGFQLILSGELDGLPEQAFYLVGNIDEATAKAINLEMRSNLKK.

ATP is bound at residue 172-179 (GGAGVGKT).

This sequence belongs to the ATPase alpha/beta chains family. In terms of assembly, F-type ATPases have 2 components, CF(1) - the catalytic core - and CF(0) - the membrane proton channel. CF(1) has five subunits: alpha(3), beta(3), gamma(1), delta(1), epsilon(1). CF(0) has four main subunits: a(1), b(1), b'(1) and c(9-12).

It localises to the plastid. Its subcellular location is the chloroplast thylakoid membrane. The catalysed reaction is ATP + H2O + 4 H(+)(in) = ADP + phosphate + 5 H(+)(out). In terms of biological role, produces ATP from ADP in the presence of a proton gradient across the membrane. The catalytic sites are hosted primarily by the beta subunits. In Saruma henryi (Upright wild ginger), this protein is ATP synthase subunit beta, chloroplastic.